The chain runs to 500 residues: Glycogen synthase (500 aa).

Lysine 20 serves as a coordination point for ADP-alpha-D-glucose.

This sequence belongs to the glycosyltransferase 1 family. Bacterial/plant glycogen synthase subfamily.

It catalyses the reaction [(1-&gt;4)-alpha-D-glucosyl](n) + ADP-alpha-D-glucose = [(1-&gt;4)-alpha-D-glucosyl](n+1) + ADP + H(+). Its pathway is glycan biosynthesis; glycogen biosynthesis. Its function is as follows. Synthesizes alpha-1,4-glucan chains using ADP-glucose. This is Glycogen synthase from Desulforudis audaxviator (strain MP104C).